Reading from the N-terminus, the 416-residue chain is Squamosa promoter-binding-like protein 8 (416 aa).

Residues 11-53 are disordered; that stretch reads SSCDDFGYNATPPPPPSLLPIMDQDGGGGSIQRDHHHHHNHQQ. The SBP-type zinc-finger motif lies at 182–260; the sequence is PPRCQAEGCK…ADHNRRRRKS (79 aa). Residues Cys185, Cys190, Cys207, His210, Cys227, Cys230, His234, and Cys246 each coordinate Zn(2+). The Bipartite nuclear localization signal motif lies at 243 to 259; sequence KKSCRKRLADHNRRRRK. Residues 250–299 are disordered; it reads LADHNRRRRKSKPSDGEHSGEKRRAQANKSAATKDKAGSSSKNAGIGDGF. Positions 261–273 are enriched in basic and acidic residues; the sequence is KPSDGEHSGEKRR.

In terms of tissue distribution, expressed in stems, leaf sheaths, and young panicles.

The protein resides in the nucleus. Functionally, probable transcription factor that plays an important role in building the laminar joint between leaf blade and leaf sheath boundary, thereby controlling ligule and auricle development. The polypeptide is Squamosa promoter-binding-like protein 8 (SPL8) (Oryza sativa subsp. indica (Rice)).